The primary structure comprises 118 residues: Immunoglobulin heavy variable 4-31 (118 aa).

A signal peptide spans methionine 1–serine 19. The framework-1 stretch occupies residues glutamine 20–serine 44. Positions glutamine 20–arginine 118 constitute an Ig-like domain. A disulfide bridge connects residues cysteine 41 and cysteine 116. A complementarity-determining-1 region spans residues glycine 45–tyrosine 54. The framework-2 stretch occupies residues tryptophan 55 to tyrosine 71. Residues isoleucine 72–threonine 78 form a complementarity-determining-2 region. A framework-3 region spans residues tyrosine 79–cysteine 116. The tract at residues alanine 117–arginine 118 is complementarity-determining-3.

As to quaternary structure, immunoglobulins are composed of two identical heavy chains and two identical light chains; disulfide-linked.

The protein localises to the secreted. The protein resides in the cell membrane. In terms of biological role, v region of the variable domain of immunoglobulin heavy chains that participates in the antigen recognition. Immunoglobulins, also known as antibodies, are membrane-bound or secreted glycoproteins produced by B lymphocytes. In the recognition phase of humoral immunity, the membrane-bound immunoglobulins serve as receptors which, upon binding of a specific antigen, trigger the clonal expansion and differentiation of B lymphocytes into immunoglobulins-secreting plasma cells. Secreted immunoglobulins mediate the effector phase of humoral immunity, which results in the elimination of bound antigens. The antigen binding site is formed by the variable domain of one heavy chain, together with that of its associated light chain. Thus, each immunoglobulin has two antigen binding sites with remarkable affinity for a particular antigen. The variable domains are assembled by a process called V-(D)-J rearrangement and can then be subjected to somatic hypermutations which, after exposure to antigen and selection, allow affinity maturation for a particular antigen. The sequence is that of Immunoglobulin heavy variable 4-31 from Homo sapiens (Human).